The chain runs to 339 residues: Geranylgeranyl transferase type-2 subunit beta (339 aa).

Thr11 carries the post-translational modification Phosphothreonine. PFTB repeat units follow at residues 28–69, 76–117, 124–165, 172–213, 220–261, and 268–310; these read LEKH…DLMG, REEI…TLYD, VDKV…ALLG, VEKA…AITS, SDLL…KIIG, and REKL…SLLG. Geranylgeranyl diphosphate is bound by residues 198 to 200 and 240 to 243; these read HAG and RPEK. Zn(2+) contacts are provided by Asp246 and Cys248. Geranylgeranyl diphosphate is bound by residues Tyr249 and 249 to 252; that span reads YSWW. His298 serves as a coordination point for Zn(2+).

It belongs to the protein prenyltransferase subunit beta family. Heterotrimer composed of RABGGTA, RABGGTB and CHM; within this trimer, RABGGTA and RABGGTB form the catalytic component B, while CHM (component A) mediates peptide substrate binding. The Rab GGTase dimer (RGGT) interacts with CHM (component A) prior to Rab protein binding; the association is stabilized by geranylgeranyl pyrophosphate (GGpp). The CHM:RGGT:Rab complex is destabilized by GGpp. Interaction of RABGGTB with prenylated PTP4A2 precludes its association with RABGGTA and inhibits enzyme activity. Interacts with CHODL. Interacts with non-phosphorylated form of RAB8A; phosphorylation of RAB8A at 'Thr-72' disrupts this interaction. It depends on Zn(2+) as a cofactor. Ubiquitous. Detected in all the major organs in adult animals.

It catalyses the reaction geranylgeranyl diphosphate + L-cysteinyl-[protein] = S-geranylgeranyl-L-cysteinyl-[protein] + diphosphate. The enzymatic reaction requires the aid of a Rab escort protein (also called component A), such as CHM. Catalyzes the transfer of a geranylgeranyl moiety from geranylgeranyl diphosphate to both cysteines of Rab proteins with the C-terminal sequence -XXCC, -XCXC and -CCXX, such as RAB1A, RAB3A, RAB5A and RAB7A. This Mus musculus (Mouse) protein is Geranylgeranyl transferase type-2 subunit beta (Rabggtb).